The sequence spans 199 residues: Neurotrophic factor BDNF precursor form (199 aa).

The segment at 1–23 (GQGSLAYPGLRTQGNLETLSGPN) is disordered. Residues 1-100 (GQGSLAYPGL…AANMSMRVRR (100 aa)) constitute a propeptide that is removed on maturation. Residues 12-23 (TQGNLETLSGPN) are compositionally biased toward polar residues. N93 carries an N-linked (GlcNAc...) asparagine glycan. C113 and C180 form a disulfide bridge.

The protein belongs to the NGF-beta family.

The protein localises to the secreted. Functionally, promotes the survival of neuronal populations that are all located either in the central nervous system or directly connected to it. This is Neurotrophic factor BDNF precursor form (BDNF) from Eunectes notaeus (Yellow anaconda).